Here is a 332-residue protein sequence, read N- to C-terminus: L-lactate dehydrogenase A chain (332 aa).

Residues 29–57 (GMVGMASAVSILLKDLCDELALVDVMEDK) and R99 contribute to the NAD(+) site. R106, N138, and R169 together coordinate substrate. N138 serves as a coordination point for NAD(+). H193 functions as the Proton acceptor in the catalytic mechanism. Residue T248 coordinates substrate.

The protein belongs to the LDH/MDH superfamily. LDH family. In terms of assembly, homotetramer.

The protein resides in the cytoplasm. The enzyme catalyses (S)-lactate + NAD(+) = pyruvate + NADH + H(+). It participates in fermentation; pyruvate fermentation to lactate; (S)-lactate from pyruvate: step 1/1. Interconverts simultaneously and stereospecifically pyruvate and lactate with concomitant interconversion of NADH and NAD(+). This Sphyraena lucasana (Lucas barracuda) protein is L-lactate dehydrogenase A chain (ldha).